A 325-amino-acid chain; its full sequence is ADP-ribose glycohydrolase MACROD1 (325 aa).

Residues K96, K103, and K129 each carry the N6-succinyllysine modification. Residue K138 forms a Glycyl lysine isopeptide (Lys-Gly) (interchain with G-Cter in SUMO2) linkage. The 182-residue stretch at 141–322 folds into the Macro domain; that stretch reads EPRYKKDKQL…IYRSRLPHYF (182 aa). Position 159-161 (159-161) interacts with substrate; the sequence is SDI. The residue at position 163 (K163) is an N6-acetyllysine. Substrate-binding positions include 172–174, 179–184, 267–273, and F306; these read AAN, GGGGVD, and ISTGVFG.

It belongs to the MacroD-type family. MacroD1/2-like subfamily. In terms of assembly, interacts with ESR1; Interacts in a manner that is estrogen independent but is enhanced by estrogen. Interacts (via macro domain) with AR.

The protein localises to the nucleus. It catalyses the reaction 3''-O-acetyl-ADP-D-ribose + H2O = ADP-D-ribose + acetate + H(+). It carries out the reaction 2''-O-acetyl-ADP-D-ribose + H2O = ADP-D-ribose + acetate + H(+). The enzyme catalyses 4-O-(ADP-D-ribosyl)-L-aspartyl-[protein] + H2O = L-aspartyl-[protein] + ADP-D-ribose + H(+). The catalysed reaction is 5-O-(ADP-D-ribosyl)-L-glutamyl-[protein] + H2O = L-glutamyl-[protein] + ADP-D-ribose + H(+). It catalyses the reaction alpha-NAD(+) + H2O = ADP-D-ribose + nicotinamide + H(+). Subject to competitive inhibition by the product ADP-ribose. Functionally, removes ADP-ribose from aspartate and glutamate residues in proteins bearing a single ADP-ribose moiety. Inactive towards proteins bearing poly-ADP-ribose. Deacetylates O-acetyl-ADP ribose, a signaling molecule generated by the deacetylation of acetylated lysine residues in histones and other proteins. Plays a role in estrogen signaling. Binds to androgen receptor (AR) and amplifies the transactivation function of AR in response to androgen. May play an important role in carcinogenesis and/or progression of hormone-dependent cancers by feed-forward mechanism that activates ESR1 transactivation. Could be an ESR1 coactivator, providing a positive feedback regulatory loop for ESR1 signal transduction. Could be involved in invasive growth by down-regulating CDH1 in endometrial cancer cells. Enhances ESR1-mediated transcription activity. This chain is ADP-ribose glycohydrolase MACROD1, found in Homo sapiens (Human).